Reading from the N-terminus, the 5073-residue chain is Malformin synthetase mlfA (5073 aa).

The tract at residues 194–585 (ERHATNRPHS…CGRADTQVKL (392 aa)) is adenylation 1. One can recognise a Carrier 1 domain in the interval 726 to 799 (SRLEQEVQLA…EAASLAEVQE (74 aa)). The residue at position 760 (serine 760) is an O-(pantetheine 4'-phosphoryl)serine. Residues 837–1268 (EDVFPCTTMQ…ALNTLSLLQA (432 aa)) are condensation 1. The interval 1296 to 1685 (DRWVTRHPEG…GRKDTQVKLR (390 aa)) is adenylation 2. Positions 1823–1900 (TPASELERTL…QLAAEVGEPA (78 aa)) constitute a Carrier 2 domain. At serine 1860 the chain carries O-(pantetheine 4'-phosphoryl)serine. Disordered regions lie at residues 1901–1930 (GQSASSASSTTEEGFTFSTPDDSSTNDGVD) and 1963–1984 (GGSSSNKTPSVSSSSSSSSSSK). 2 stretches are compositionally biased toward low complexity: residues 1903 to 1927 (SASSASSTTEEGFTFSTPDDSSTND) and 1965 to 1982 (SSSNKTPSVSSSSSSSSS). A condensation 2 region spans residues 2031 to 2446 (EDIYPATALQ…AVSCSDTETL (416 aa)). The adenylation 3 stretch occupies residues 2469–2861 (SRTPHAPAVC…IGRRDGQLKL (393 aa)). The Carrier 3 domain maps to 2997 to 3073 (RPKTSQEQEM…QLICHLNSIR (77 aa)). Serine 3034 is modified (O-(pantetheine 4'-phosphoryl)serine). Condensation stretches follow at residues 3090-3555 (WVAL…TYDQ) and 3576-3995 (DIYP…EQLV). An adenylation 4 region spans residues 4020–4410 (HASRQAVCAW…VGRKDNQIKF (391 aa)). The region spanning 4544–4620 (MPSTAAERKM…DLGDQARSPN (77 aa)) is the Carrier 4 domain. At serine 4581 the chain carries O-(pantetheine 4'-phosphoryl)serine. The tract at residues 4611 to 4633 (DLGDQARSPNADNQRVSTASSAG) is disordered. The segment covering 4617 to 4631 (RSPNADNQRVSTASS) has biased composition (polar residues). A condensation 5 region spans residues 4657–4991 (DVLPTTSFQR…LQTIVQHQNN (335 aa)).

Belongs to the NRP synthetase family.

Its pathway is secondary metabolite biosynthesis. Functionally, nonribosomal peptide synthetase; part of the gene cluster that mediates the biosynthesis of malformins, cyclic pentapeptides with a disulfide bond between 2 consecutive cysteins, that show potential anti-tumor as well as antimalarial and antitrypanosomal properties. The nonribosomal peptide synthetase mlfA is responsible of the formation of the cyclic pentapeptide. The malformin biosynthesis clusters in malformin-producing fungi also contain enzymes involved in the formation of the disulfide bond between the two consecutive cysteins within malformins, in addition to additional tailoring enzymes such as methyltransferases or oxidoreductases. They are also composed of up to 4 major facilitator superfamily transporters, and transcription factors probably involved in the regulation of the expression of those clusters. The polypeptide is Malformin synthetase mlfA (Aspergillus tubingensis (strain CBS 134.48)).